We begin with the raw amino-acid sequence, 389 residues long: Succinate--CoA ligase [ADP-forming] subunit beta (389 aa).

Residues Lys46, 53-55 (GRG), Glu99, Cys102, and Glu107 contribute to the ATP site. Mg(2+) is bound by residues Asn199 and Asp213. Residues Asn264 and 321–323 (GIV) contribute to the substrate site.

This sequence belongs to the succinate/malate CoA ligase beta subunit family. In terms of assembly, heterotetramer of two alpha and two beta subunits. Mg(2+) is required as a cofactor.

The enzyme catalyses succinate + ATP + CoA = succinyl-CoA + ADP + phosphate. It carries out the reaction GTP + succinate + CoA = succinyl-CoA + GDP + phosphate. Its pathway is carbohydrate metabolism; tricarboxylic acid cycle; succinate from succinyl-CoA (ligase route): step 1/1. In terms of biological role, succinyl-CoA synthetase functions in the citric acid cycle (TCA), coupling the hydrolysis of succinyl-CoA to the synthesis of either ATP or GTP and thus represents the only step of substrate-level phosphorylation in the TCA. The beta subunit provides nucleotide specificity of the enzyme and binds the substrate succinate, while the binding sites for coenzyme A and phosphate are found in the alpha subunit. The polypeptide is Succinate--CoA ligase [ADP-forming] subunit beta (Haemophilus influenzae (strain 86-028NP)).